The following is a 169-amino-acid chain: Cilia- and flagella-associated protein 68 (169 aa).

2 mn regions span residues 98–109 (TTYDTSYNNRRP) and 139–149 (KSTYMTSYSKP).

Belongs to the CFAP68 family. In terms of assembly, microtubule inner protein component of sperm flagellar doublet microtubules.

It is found in the cytoplasm. The protein resides in the cytoskeleton. Its subcellular location is the cilium axoneme. The protein localises to the flagellum axoneme. It localises to the nucleus. It is found in the cell projection. The protein resides in the cilium. In terms of biological role, microtubule inner protein (MIP) part of the dynein-decorated doublet microtubules (DMTs) in cilia axoneme, which is required for motile cilia beating. The sequence is that of Cilia- and flagella-associated protein 68 (CFAP68) from Bos taurus (Bovine).